We begin with the raw amino-acid sequence, 459 residues long: Bifunctional protein GlmU (459 aa).

Residues 1-229 are pyrophosphorylase; sequence MSNFAIILAA…FDESLGVNDR (229 aa). UDP-N-acetyl-alpha-D-glucosamine contacts are provided by residues 8–11, lysine 22, glutamine 72, and 77–78; these read LAAG and GT. Residue aspartate 102 coordinates Mg(2+). Glycine 139, glutamate 154, asparagine 169, and asparagine 227 together coordinate UDP-N-acetyl-alpha-D-glucosamine. Asparagine 227 contacts Mg(2+). The segment at 230–250 is linker; the sequence is VALATAESVMRRRINHKHMVN. The N-acetyltransferase stretch occupies residues 251–459; the sequence is GVSFVNPEAT…TRLPHHPKNQ (209 aa). UDP-N-acetyl-alpha-D-glucosamine-binding residues include arginine 332 and lysine 350. Histidine 362 (proton acceptor) is an active-site residue. The UDP-N-acetyl-alpha-D-glucosamine site is built by tyrosine 365 and asparagine 376. Residues alanine 379, 385 to 386, serine 404, alanine 422, and arginine 439 each bind acetyl-CoA; that span reads NY.

In the N-terminal section; belongs to the N-acetylglucosamine-1-phosphate uridyltransferase family. This sequence in the C-terminal section; belongs to the transferase hexapeptide repeat family. As to quaternary structure, homotrimer. Mg(2+) is required as a cofactor.

It is found in the cytoplasm. It catalyses the reaction alpha-D-glucosamine 1-phosphate + acetyl-CoA = N-acetyl-alpha-D-glucosamine 1-phosphate + CoA + H(+). The enzyme catalyses N-acetyl-alpha-D-glucosamine 1-phosphate + UTP + H(+) = UDP-N-acetyl-alpha-D-glucosamine + diphosphate. It participates in nucleotide-sugar biosynthesis; UDP-N-acetyl-alpha-D-glucosamine biosynthesis; N-acetyl-alpha-D-glucosamine 1-phosphate from alpha-D-glucosamine 6-phosphate (route II): step 2/2. It functions in the pathway nucleotide-sugar biosynthesis; UDP-N-acetyl-alpha-D-glucosamine biosynthesis; UDP-N-acetyl-alpha-D-glucosamine from N-acetyl-alpha-D-glucosamine 1-phosphate: step 1/1. The protein operates within bacterial outer membrane biogenesis; LPS lipid A biosynthesis. Functionally, catalyzes the last two sequential reactions in the de novo biosynthetic pathway for UDP-N-acetylglucosamine (UDP-GlcNAc). The C-terminal domain catalyzes the transfer of acetyl group from acetyl coenzyme A to glucosamine-1-phosphate (GlcN-1-P) to produce N-acetylglucosamine-1-phosphate (GlcNAc-1-P), which is converted into UDP-GlcNAc by the transfer of uridine 5-monophosphate (from uridine 5-triphosphate), a reaction catalyzed by the N-terminal domain. This chain is Bifunctional protein GlmU, found in Streptococcus pneumoniae (strain Hungary19A-6).